A 610-amino-acid chain; its full sequence is ESX-5 secretion system protein EccA5 (610 aa).

357–364 is a binding site for ATP; that stretch reads GPPGTGKT.

This sequence belongs to the CbxX/CfxQ family. In terms of assembly, part of the ESX-5 / type VII secretion system (T7SS), which is composed of cytosolic and membrane components.

The protein localises to the cytoplasm. Functionally, part of the ESX-5 specialized secretion system, which is responsible for the secretion of EsxN and a number of PE_PGRS and PPE proteins. EccA5 exhibits ATPase activity and may provide energy for the export of ESX-5 substrates. The chain is ESX-5 secretion system protein EccA5 from Mycobacterium marinum (strain ATCC BAA-535 / M).